Consider the following 439-residue polypeptide: C4-dicarboxylate transport protein (439 aa).

The next 9 helical transmembrane spans lie at 9–29 (HLYF…YYLP), 45–65 (MIKM…IAGM), 80–100 (LYFE…INII), 150–170 (GEIL…SAMG), 186–206 (AFFG…FGAM), 221–241 (LGML…VVLG), 291–311 (VVGL…SIYL), 334–354 (ILGV…SGFV), and 357–377 (AATF…ILGI).

Belongs to the dicarboxylate/amino acid:cation symporter (DAACS) (TC 2.A.23) family.

Its subcellular location is the cell inner membrane. Its function is as follows. Responsible for the transport of dicarboxylates such as succinate, fumarate, and malate from the periplasm across the membrane. The chain is C4-dicarboxylate transport protein from Geobacter sp. (strain M21).